We begin with the raw amino-acid sequence, 438 residues long: Coenzyme A disulfide reductase (438 aa).

Residue 8–33 participates in FAD binding; that stretch reads GAVAGGATCASQIRRLDKESDIIIFE. Substrate-binding residues include Thr15, Gln19, Arg22, Ser39, and Asn42. Cys43 serves as the catalytic Nucleophile. The active-site Redox-active is Cys43. Lys71 contacts substrate. NADP(+) is bound at residue 151-166; that stretch reads VLVIGAGYVSLEVLEN. Position 267–277 (267–277) interacts with FAD; that stretch reads TNVPNIYAIGD. A substrate-binding site is contributed by His299. Tyr419 is an FAD binding site. Lys427 lines the substrate pocket.

It belongs to the class-III pyridine nucleotide-disulfide oxidoreductase family. Homodimer. Requires FAD as cofactor.

The enzyme catalyses NADP(+) + 2 CoA = CoA-disulfide + NADPH + H(+). Catalyzes specifically the NADPH-dependent reduction of coenzyme A disulfide. The polypeptide is Coenzyme A disulfide reductase (Staphylococcus aureus (strain JH1)).